A 361-amino-acid chain; its full sequence is Polyribonucleotide 5'-hydroxyl-kinase MJ1315 (361 aa).

Residue 39–46 participates in ATP binding; the sequence is GGVDSGKT.

A divalent metal cation serves as cofactor.

It catalyses the reaction a 5'-end dephospho-2'-deoxyribonucleoside-DNA + ATP = a 5'-end 5'-phospho-2'-deoxyribonucleoside-DNA + ADP + H(+). It carries out the reaction a 5'-end dephospho-ribonucleoside-RNA + ATP = a 5'-end 5'-phospho-ribonucleoside-RNA + ADP + H(+). Polynucleotide kinase that can phosphorylate the 5'-hydroxyl groups of both single-stranded RNA (ssRNA) and single-stranded DNA (ssDNA). Exhibits a strong preference for ssRNA. The protein is Polyribonucleotide 5'-hydroxyl-kinase MJ1315 of Methanocaldococcus jannaschii (strain ATCC 43067 / DSM 2661 / JAL-1 / JCM 10045 / NBRC 100440) (Methanococcus jannaschii).